Consider the following 358-residue polypeptide: Peptide chain release factor 1 (358 aa).

Position 235 is an N5-methylglutamine (Gln-235).

It belongs to the prokaryotic/mitochondrial release factor family. In terms of processing, methylated by PrmC. Methylation increases the termination efficiency of RF1.

It localises to the cytoplasm. Peptide chain release factor 1 directs the termination of translation in response to the peptide chain termination codons UAG and UAA. This Neisseria gonorrhoeae (strain ATCC 700825 / FA 1090) protein is Peptide chain release factor 1.